The sequence spans 314 residues: Replication initiation protein (314 aa).

Residues 1–10 (MSKNNHANHS) show a composition bias toward polar residues. The interval 1 to 25 (MSKNNHANHSNHLENHDLDNFSKTG) is disordered. Over residues 11–20 (NHLENHDLDN) the composition is skewed to basic and acidic residues.

Belongs to the plasmid replication initiation factor family.

Its function is as follows. This protein is probably a specific topoisomerase involved in initiating replication. This protein is specifically required and may be rate-limiting for replication of the plasmid in vivo. This Staphylococcus aureus protein is Replication initiation protein (repN).